The primary structure comprises 398 residues: DnaJ-like protein R260 (398 aa).

Residues 7-72 enclose the J domain; that stretch reads DLYEILGLTP…EKRRVYDQYG (66 aa). The segment at 118–202 adopts a CR-type zinc-finger fold; it reads KKTVKVTITV…CKGAGINKSE (85 aa). CXXCXGXG motif repeat units lie at residues 131–138, 147–154, 173–180, and 190–197; these read CDDCDATG, CKVCRGKG, CHGCQGKK, and CPSCKGAG. Positions 364-398 are disordered; that stretch reads LRQINTDPSDESQDRDSEESYGGHGRPEGVGCAQQ. Residues 371 to 382 are compositionally biased toward acidic residues; it reads PSDESQDRDSEE.

The cofactor is Zn(2+).

The polypeptide is DnaJ-like protein R260 (Acanthamoeba polyphaga mimivirus (APMV)).